The primary structure comprises 631 residues: FAST kinase domain-containing protein 4 (631 aa).

The transit peptide at 1–107 (MAAHLVKRCT…NQAAMVLIRL (107 aa)) directs the protein to the mitochondrion. Ser-553 carries the phosphoserine modification. In terms of domain architecture, RAP spans 561–619 (LAFLRWEFPNFNSRSKDLLGRFVLARRHIVAAGFLIVDVPFYEWLELKSEWQKGAYLKD).

This sequence belongs to the FAST kinase family. Ubiquitously expressed. Expression detected in spleen, thymus, testis, ovary, colon, heart, smooth muscle, kidney, brain, lung, liver and white adipose tissue with highest expression in smooth muscle.

It localises to the mitochondrion matrix. In terms of biological role, plays a role in processing of mitochondrial RNA precursors and in stabilization of a subset of mature mitochondrial RNA species, such as MT-CO1, MT-CO2, MT-CYB, MT-CO3, MT-ND3, MT-ND5 and MT-ATP8/6. May play a role in cell cycle progression. This chain is FAST kinase domain-containing protein 4, found in Homo sapiens (Human).